The following is a 99-amino-acid chain: DNA-directed RNA polymerase subunit Rpo11 (99 aa).

This sequence belongs to the archaeal Rpo11/eukaryotic RPB11/RPC19 RNA polymerase subunit family. As to quaternary structure, part of the RNA polymerase complex.

The protein localises to the cytoplasm. It carries out the reaction RNA(n) + a ribonucleoside 5'-triphosphate = RNA(n+1) + diphosphate. DNA-dependent RNA polymerase (RNAP) catalyzes the transcription of DNA into RNA using the four ribonucleoside triphosphates as substrates. The polypeptide is DNA-directed RNA polymerase subunit Rpo11 (Aeropyrum pernix (strain ATCC 700893 / DSM 11879 / JCM 9820 / NBRC 100138 / K1)).